A 518-amino-acid polypeptide reads, in one-letter code: OTU domain-containing protein 5 (518 aa).

Disordered regions lie at residues 1–79 (MTIL…SGGA) and 105–144 (PGHS…ETAA). The span at 39-53 (SSPPPRWAYPGNPAP) shows a compositional bias: pro residues. A compositionally biased stretch (low complexity) spans 116–125 (SAGPGAPGSS). Residues 171 to 294 (FIIKQMKEDG…NIHYNSVVNP (124 aa)) enclose the OTU domain. Positions 176–182 (MKEDGAC) are cys-loop. The active site involves Asp-179. Cys-182 (nucleophile) is an active-site residue. The segment at 231–241 (KRKNNCHGNHI) is variable-loop. Residues 282 to 287 (YHRNIH) are his-loop. His-287 is a catalytic residue. The tract at residues 371-450 (ARQPRKASAT…GPSNQTCAGA (80 aa)) is disordered. Positions 377 to 390 (ASATCSSATAAASS) are enriched in low complexity.

This sequence belongs to the peptidase C85 family.

The catalysed reaction is Thiol-dependent hydrolysis of ester, thioester, amide, peptide and isopeptide bonds formed by the C-terminal Gly of ubiquitin (a 76-residue protein attached to proteins as an intracellular targeting signal).. Its function is as follows. Deubiquitinating enzyme that may function as negative regulator of the innate immune system. Has peptidase activity towards 'Lys-48'- and 'Lys-63'-linked polyubiquitin chains. Can also cleave 'Lys-11'-linked ubiquitin chains (in vitro). The chain is OTU domain-containing protein 5 (otud5) from Xenopus tropicalis (Western clawed frog).